The following is a 74-amino-acid chain: MGKEDVIRMEGTIIEALPNAMFRVELDNGHKVLAHVSGRMRKNFIRLVPGDRVIVELSVYDLTRGRIVYRKKPE.

The S1-like domain occupies M1–K72.

This sequence belongs to the IF-1 family. In terms of assembly, component of the 30S ribosomal translation pre-initiation complex which assembles on the 30S ribosome in the order IF-2 and IF-3, IF-1 and N-formylmethionyl-tRNA(fMet); mRNA recruitment can occur at any time during PIC assembly.

The protein localises to the cytoplasm. Its function is as follows. One of the essential components for the initiation of protein synthesis. Stabilizes the binding of IF-2 and IF-3 on the 30S subunit to which N-formylmethionyl-tRNA(fMet) subsequently binds. Helps modulate mRNA selection, yielding the 30S pre-initiation complex (PIC). Upon addition of the 50S ribosomal subunit IF-1, IF-2 and IF-3 are released leaving the mature 70S translation initiation complex. In Thermotoga petrophila (strain ATCC BAA-488 / DSM 13995 / JCM 10881 / RKU-1), this protein is Translation initiation factor IF-1.